A 145-amino-acid polypeptide reads, in one-letter code: 3-hydroxyacyl-[acyl-carrier-protein] dehydratase FabZ (145 aa).

The active site involves His49.

The protein belongs to the thioester dehydratase family. FabZ subfamily.

It is found in the cytoplasm. It catalyses the reaction a (3R)-hydroxyacyl-[ACP] = a (2E)-enoyl-[ACP] + H2O. Involved in unsaturated fatty acids biosynthesis. Catalyzes the dehydration of short chain beta-hydroxyacyl-ACPs and long chain saturated and unsaturated beta-hydroxyacyl-ACPs. In Rickettsia akari (strain Hartford), this protein is 3-hydroxyacyl-[acyl-carrier-protein] dehydratase FabZ.